We begin with the raw amino-acid sequence, 2130 residues long: DNA polymerase zeta catalytic subunit (2130 aa).

Disordered regions lie at residues 528 to 635 (PAES…TGTL), 734 to 891 (GCEI…HDEA), 927 to 954 (FTPS…SNTP), and 1189 to 1243 (QAKD…SAAQ). Low complexity predominate over residues 553-574 (TPIKSISSKSKSSPSKTPTTPI). Residues 620–629 (PRLSLQLDQG) are compositionally biased toward polar residues. The segment covering 735 to 753 (CEIERPHRSEGSALDELKP) has biased composition (basic and acidic residues). 3 stretches are compositionally biased toward polar residues: residues 771–786 (SEIQ…TSLD), 794–808 (LSQS…SMNG), and 818–835 (DSSS…SVSE). Basic and acidic residues predominate over residues 840–860 (LESKPKKSDETARSCDEKLQR). Residues 938 to 954 (TETTPQLSPKSNESNTP) show a composition bias toward polar residues. Residues 1228–1243 (PSSQSSEQSVSSSAAQ) show a composition bias toward low complexity. Zn(2+) contacts are provided by C2041, C2045, C2054, and C2057. [4Fe-4S] cluster is bound by residues C2086, C2089, C2098, and C2103. The CysB motif signature appears at 2086–2103 (CQACCGRLGSLQCDSLDC).

The protein belongs to the DNA polymerase type-B family. Catalytic subunit of the zeta DNA polymerase complex, which consists of PolZ1/DNApol-zeta and the accessory component PolZ2/Rev7. Interacts with the apurinic/apyrimidinic (AP) endonuclease Rrp1; the interaction is likely indirect and mediated via PolZ2. Requires [4Fe-4S] cluster as cofactor.

The catalysed reaction is DNA(n) + a 2'-deoxyribonucleoside 5'-triphosphate = DNA(n+1) + diphosphate. Its activity is regulated as follows. Inhibited by tetracyclic diterpene antibiotic aphidicolin. As the catalytic subunit of the DNA polymerase zeta complex, plays a crucial role in translesion DNA synthesis (TLS) and various DNA repair mechanisms. Lacks an intrinsic 3'-5' exonuclease activity and thus has no proofreading function. During homologous recombination (HR) repair, has a overlapping role with the error-prone translesion polymerase eta to initiate repair synthesis which is completed by end joining or another polymerase that can bind and reinitiate synthesis. May participate in the Rrp1-dependent base excision repair (BER) pathway responsible for repair of DNA lesions that gives rise to apurinic/apyrimidinic (AP) sites. Unlike mammalian orthologs, it is not an error-prone polymerase. This chain is DNA polymerase zeta catalytic subunit, found in Drosophila melanogaster (Fruit fly).